Here is a 308-residue protein sequence, read N- to C-terminus: Exosporium protein A (308 aa).

The protein resides in the spore wall. The protein is Exosporium protein A of Clostridium sporogenes (strain ATCC 15579).